A 506-amino-acid polypeptide reads, in one-letter code: Anaerobic nitric oxide reductase transcription regulator NorR (506 aa).

Asp57 is modified (4-aspartylphosphate). Residues 187–416 (MIGLSPAMTQ…LEHAIHRAVV (230 aa)) form the Sigma-54 factor interaction domain. ATP is bound by residues 215-222 (GETGTGKE) and 278-287 (ADNGTLFLDE). The segment at residues 481 to 500 (WAASARALETDVANLHRLAK) is a DNA-binding region (H-T-H motif).

It participates in nitrogen metabolism; nitric oxide reduction. In terms of biological role, required for the expression of anaerobic nitric oxide (NO) reductase, acts as a transcriptional activator for at least the norVW operon. Activation also requires sigma-54. The polypeptide is Anaerobic nitric oxide reductase transcription regulator NorR (Salmonella choleraesuis (strain SC-B67)).